We begin with the raw amino-acid sequence, 309 residues long: Homoserine O-acetyltransferase (309 aa).

The Acyl-thioester intermediate role is filled by Cys-142. The substrate site is built by Lys-163 and Ser-192. Catalysis depends on His-235, which acts as the Proton acceptor. Glu-237 is an active-site residue. Arg-249 is a binding site for substrate.

The protein belongs to the MetA family.

It is found in the cytoplasm. The catalysed reaction is L-homoserine + acetyl-CoA = O-acetyl-L-homoserine + CoA. It functions in the pathway amino-acid biosynthesis; L-methionine biosynthesis via de novo pathway; O-acetyl-L-homoserine from L-homoserine: step 1/1. Its function is as follows. Transfers an acetyl group from acetyl-CoA to L-homoserine, forming acetyl-L-homoserine. The sequence is that of Homoserine O-acetyltransferase from Allorhizobium ampelinum (strain ATCC BAA-846 / DSM 112012 / S4) (Agrobacterium vitis (strain S4)).